A 389-amino-acid chain; its full sequence is Elongation factor Tu-3 (389 aa).

Positions 10-203 (KPHLNIGTMG…AVDTYVPMPE (194 aa)) constitute a tr-type G domain. The tract at residues 19-26 (GHVDHGKT) is G1. 19–26 (GHVDHGKT) is a GTP binding site. Threonine 26 is a binding site for Mg(2+). The interval 60–64 (GITIN) is G2. Residues 81 to 84 (DMPG) form a G3 region. GTP contacts are provided by residues 81–85 (DMPGH) and 136–139 (NKAD). Positions 136-139 (NKAD) are G4. Residues 173 to 175 (SGL) are G5.

It belongs to the TRAFAC class translation factor GTPase superfamily. Classic translation factor GTPase family. EF-Tu/EF-1A subfamily. Monomer.

The protein localises to the cytoplasm. The catalysed reaction is GTP + H2O = GDP + phosphate + H(+). GTP hydrolase that promotes the GTP-dependent binding of aminoacyl-tRNA to the A-site of ribosomes during protein biosynthesis. In Streptomyces ramocissimus, this protein is Elongation factor Tu-3.